The following is a 336-amino-acid chain: 25S rRNA (uridine(2634)-N(3))-methyltransferase (336 aa).

The segment at 286–307 (PGYHHRRTNSEQDTTKPAKERD) is disordered. The span at 293 to 307 (TNSEQDTTKPAKERD) shows a compositional bias: basic and acidic residues.

It belongs to the class I-like SAM-binding methyltransferase superfamily. BMT5 family.

It is found in the nucleus. Its subcellular location is the nucleolus. The catalysed reaction is uridine(2634) in 25S rRNA + S-adenosyl-L-methionine = N(3)-methyluridine(2634) in 25S rRNA + S-adenosyl-L-homocysteine + H(+). Its function is as follows. S-adenosyl-L-methionine-dependent methyltransferase that specifically methylates the N(3) position of uridine 2634 (m3U2634) in 25S rRNA. This Saccharomyces cerevisiae (strain ATCC 204508 / S288c) (Baker's yeast) protein is 25S rRNA (uridine(2634)-N(3))-methyltransferase (BMT5).